A 245-amino-acid chain; its full sequence is 1-(5-phosphoribosyl)-5-[(5-phosphoribosylamino)methylideneamino] imidazole-4-carboxamide isomerase (245 aa).

Aspartate 7 acts as the Proton acceptor in catalysis. Catalysis depends on aspartate 129, which acts as the Proton donor.

This sequence belongs to the HisA/HisF family.

It is found in the cytoplasm. It catalyses the reaction 1-(5-phospho-beta-D-ribosyl)-5-[(5-phospho-beta-D-ribosylamino)methylideneamino]imidazole-4-carboxamide = 5-[(5-phospho-1-deoxy-D-ribulos-1-ylimino)methylamino]-1-(5-phospho-beta-D-ribosyl)imidazole-4-carboxamide. It participates in amino-acid biosynthesis; L-histidine biosynthesis; L-histidine from 5-phospho-alpha-D-ribose 1-diphosphate: step 4/9. The protein is 1-(5-phosphoribosyl)-5-[(5-phosphoribosylamino)methylideneamino] imidazole-4-carboxamide isomerase of Escherichia coli (strain SMS-3-5 / SECEC).